The primary structure comprises 571 residues: MYYMLIGFIIVVIAVIGAGYILKRKHYQRINELEEKKIKLRERPVIDELSKVKKLKLTGQTEALFESWRSSWDEIETRLFPDLEEVLLEAEMNTDRYKFRSATHAENDIEQMLVVIEKQMDQILGGLKELLISEEKNAKESRATKEKFAELRREVLTRGFKLGETLPYIETKLSELSESLNSYDSLTDQGDHLEAREIVIVVQKEMQVIEAQMERIPSLLHETDTILPEEMTKLRAGYEEMVRKGYYLAQMELDKEISRMKNQIDKMKKNVINLDLDEAEQGVEELHNEIDLFYDTLEHEAEARHFVKENHSPTSDKLQRQNAVSDALAEQITEVKQTYHVAEDDLAVYLKTSAKLSEAKENFEQLTALIASGEIAYSAAQDTLKEIDAALITISTEQDKFAEELRSLRKDELEARDDAERMRRAIITLDRKMERERLPGLPEEYLSLREHMGESIDALEKRLEEKPLNMKAVSQDWRIAEEDLTHLTEKAEEMMENVRLVEHVIQYANRYRLRNKELADELVQAENHFYNDYQYKKALEIAVTALEKVETGAFKKVEKAYESKVSVDDIE.

Residues 1 to 3 (MYY) lie on the Extracellular side of the membrane. The chain crosses the membrane as a helical span at residues 4-22 (MLIGFIIVVIAVIGAGYIL). At 23 to 571 (KRKHYQRINE…ESKVSVDDIE (549 aa)) the chain is on the cytoplasmic side. 4 coiled-coil regions span residues 248–298 (LAQM…DTLE), 326–374 (DALA…ASGE), 400–437 (KFAE…ERER), and 478–529 (RIAE…ENHF).

The protein belongs to the EzrA family.

Its subcellular location is the cell membrane. Negative regulator of FtsZ ring formation; modulates the frequency and position of FtsZ ring formation. Inhibits FtsZ ring formation at polar sites. Interacts either with FtsZ or with one of its binding partners to promote depolymerization. The sequence is that of Septation ring formation regulator EzrA from Listeria monocytogenes serovar 1/2a (strain ATCC BAA-679 / EGD-e).